A 487-amino-acid chain; its full sequence is Serine/threonine-protein kinase 4 (487 aa).

M1 is modified (N-acetylmethionine). The residue at position 3 (T3) is a Phosphothreonine. Residues 30-281 (FDVLEKLGEG…ATQLLQHPFV (252 aa)) enclose the Protein kinase domain. ATP-binding positions include 36 to 44 (LGEGSYGSV) and K59. D149 acts as the Proton acceptor in catalysis. At T183 the chain carries Phosphothreonine; by autocatalysis. 2 positions are modified to phosphoserine: S265 and S320. A coiled-coil region spans residues 289 to 327 (ILRDLINEAMDVKLKRQEAQQREVDQEEEENSEEDELDS). Residues 305–332 (QEAQQREVDQEEEENSEEDELDSGTMVR) are disordered. Acidic residues predominate over residues 313-326 (DQEEEENSEEDELD). 2 positions are modified to phosphothreonine: T340 and T367. Residue T387 is modified to Phosphothreonine; by PKB/AKT1. Phosphoserine occurs at positions 410 and 414. Residue Y433 is modified to Phosphotyrosine. Positions 433-480 (YEFLKSWTVEDLQKRLLALDPMMEQEIEEIRQKYQSKRQPILDAIEAK) constitute an SARAH domain.

The protein belongs to the protein kinase superfamily. STE Ser/Thr protein kinase family. STE20 subfamily. Homodimer; mediated via the coiled-coil region. Interacts with NORE1, which inhibits autoactivation. Interacts with and stabilizes SAV1. Interacts with RASSF1. Interacts with FOXO3. Interacts with RASSF2 (via SARAH domain). Interacts with AR, PKB/AKT1, TNNI3 and SIRT1. Interacts with DLG5 (via PDZ domain 3). Interacts with MARK3 and SCRIB in the presence of DLG5. Mg(2+) is required as a cofactor. In terms of processing, autophosphorylated on serine and threonine residues. Phosphorylation at Thr-387 by PKB/AKT1, leads to inhibition of its: kinase activity, nuclear translocation and autophosphorylation at Thr-183. It also diminishes its cleavage by caspases and its ability to phosphorylate FOXO3. Proteolytically cleaved by caspase-3 during apoptosis at Asp-326 and Asp-349 resulting in a 37 kDa or a 39 kDa subunit respectively. The 39 kDa subunit is further cleaved into the 37 kDa form. Proteolytic cleavage results in kinase activation and nuclear translocation of the truncated form (MST1/N). It is less likely that cleavage at Asp-349 is a prerequisite for activation as this site is not conserved in the murine ortholog.

It localises to the cytoplasm. The protein resides in the nucleus. The catalysed reaction is L-seryl-[protein] + ATP = O-phospho-L-seryl-[protein] + ADP + H(+). It catalyses the reaction L-threonyl-[protein] + ATP = O-phospho-L-threonyl-[protein] + ADP + H(+). With respect to regulation, inhibited by the C-terminal non-catalytic region. Activated by caspase-cleavage. Full activation also requires homodimerization and autophosphorylation of Thr-183. Activated by RASSF1 which acts by preventing its dephosphorylation. Its function is as follows. Stress-activated, pro-apoptotic kinase which, following caspase-cleavage, enters the nucleus and induces chromatin condensation followed by internucleosomal DNA fragmentation. Key component of the Hippo signaling pathway which plays a pivotal role in organ size control and tumor suppression by restricting proliferation and promoting apoptosis. The core of this pathway is composed of a kinase cascade wherein STK3/MST2 and STK4/MST1, in complex with its regulatory protein SAV1, phosphorylates and activates LATS1/2 in complex with its regulatory protein MOB1, which in turn phosphorylates and inactivates YAP1 oncoprotein and WWTR1/TAZ. Phosphorylation of YAP1 by LATS2 inhibits its translocation into the nucleus to regulate cellular genes important for cell proliferation, cell death, and cell migration. STK3/MST2 and STK4/MST1 are required to repress proliferation of mature hepatocytes, to prevent activation of facultative adult liver stem cells (oval cells), and to inhibit tumor formation. Phosphorylates 'Ser-14' of histone H2B (H2BS14ph) during apoptosis. Phosphorylates FOXO3 upon oxidative stress, which results in its nuclear translocation and cell death initiation. Phosphorylates MOBKL1A, MOBKL1B and RASSF2. Phosphorylates TNNI3 (cardiac Tn-I) and alters its binding affinity to TNNC1 (cardiac Tn-C) and TNNT2 (cardiac Tn-T). Phosphorylates FOXO1 on 'Ser-212' and regulates its activation and stimulates transcription of PMAIP1 in a FOXO1-dependent manner. Phosphorylates SIRT1 and inhibits SIRT1-mediated p53/TP53 deacetylation, thereby promoting p53/TP53 dependent transcription and apoptosis upon DNA damage. Acts as an inhibitor of PKB/AKT1. Phosphorylates AR on 'Ser-650' and suppresses its activity by intersecting with PKB/AKT1 signaling and antagonizing formation of AR-chromatin complexes. This chain is Serine/threonine-protein kinase 4 (STK4), found in Bos taurus (Bovine).